Here is a 408-residue protein sequence, read N- to C-terminus: Potassium channel subfamily K member 13 (408 aa).

Residues 1 to 19 (MAGRGFSWGPGHLNEDNAR) lie on the Cytoplasmic side of the membrane. A helical membrane pass occupies residues 20 to 40 (FLLLAALIVLYLLGGAAVFSA). 2 N-linked (GlcNAc...) asparagine glycosylation sites follow: Asn59 and Asn65. Positions 95 to 115 (WDFTGAFYFVGTVVSTIGFGM) form an intramembrane region, pore-forming. 3 residues coordinate K(+): Thr110, Ile111, and Gly112. Residues 110–115 (TIGFGM) are selectivity filter 1. A helical membrane pass occupies residues 125 to 145 (IFLIFYGLVGCSSTILFFNLF). At 146 to 193 (LERLITIIAYIMKSCHQRQLRRRGALPQESLKDAGQCEVDSLAGWKPS) the chain is on the cytoplasmic side. Residues 194-214 (VYYVMLILCTASILISCCASA) form a helical membrane-spanning segment. An intramembrane region (pore-forming) is located at residues 224–244 (YFDSLYFCFVAFSTIGFGDLV). Residues Thr237, Ile238, Gly239, and Phe240 each coordinate K(+). Positions 237–242 (TIGFGD) are selectivity filter 2. The helical transmembrane segment at 263-283 (VFILMGVCCIYSLFNVISILI) threads the bilayer. Residues 284–408 (KQSLNWILRK…NRLAETSGDR (125 aa)) lie on the Cytoplasmic side of the membrane.

The protein belongs to the two pore domain potassium channel (TC 1.A.1.8) family. Homodimer. Heterodimer with KCNK12. In terms of tissue distribution, expressed in microglia (at protein level).

It localises to the cell membrane. It carries out the reaction K(+)(in) = K(+)(out). The channel conductance is activated by arachidonic acid and inhibited by Ba(2+) ions, volatile anesthetics such as halothane and antiarrhythmic drugs mexiletine and lidocaine. Insensitive to extracellular pH change. K(+) channel that conducts outward rectifying tonic currents potentiated by purinergic signals. Homo- and heterodimerizes to form functional channels with distinct regulatory and gating properties. Contributes most of K(+) currents at the plasma membrane of resting microglia. Maintains a depolarized membrane potential required for proper ramified microglia morphology and phagocytosis, selectively mediating microglial pruning of presynaptic compartments at hippocampal excitatory synapses. Upon local release of ATP caused by neuronal injury or infection, it is potentiated by P2RY12 and P2RX7 receptor signaling and contributes to ATP-triggered K(+) efflux underlying microglial NLRP3 inflammasome assembly and IL1B release. This Homo sapiens (Human) protein is Potassium channel subfamily K member 13.